We begin with the raw amino-acid sequence, 463 residues long: Dialkyldecalin synthase (463 aa).

FAD-binding positions include Val13, 32–33, Ile121, and Asp275; that span reads ER.

The protein belongs to the PheA/TfdB FAD monooxygenase family. In terms of assembly, homodimer. FAD is required as a cofactor.

It catalyses the reaction 4-[(2E,7S,8E,10E,13R,14R,16E,18E)-14-ethyl-7,13-dihydroxy-2,16,18-trimethylicosa-2,8,10,16,18-pentaenoyl]-2-methylidene-5-oxo-2,5-dihydro-1H-pyrrol-3-olate = 4-[(1R,2R,4aS,5S,8aR)-2-[(2R,3R,5E,7E)-3-ethyl-2-hydroxy-5,7-dimethylnona-5,7-dien-1-yl]-5-hydroxy-1-methyl-1,2,4a,5,6,7,8,8a-octahydronaphthalene-1-carbonyl]-2-methylidene-5-oxo-2,5-dihydro-1H-pyrrol-3-olate. It functions in the pathway antibiotic biosynthesis. In terms of biological role, involved in the biosynthesis of the spirotetramate antibiotics pyrroindomycins. Catalyzes the intramolecular cyclization forming the dialkyldecalin moiety in pyrroindomycins, via an endo-selective [4+2] cycloaddition reaction. The chain is Dialkyldecalin synthase from Streptomyces rugosporus.